The sequence spans 433 residues: Serine hydroxymethyltransferase (433 aa).

Position 121 to 123 (121 to 123) interacts with (6S)-5,6,7,8-tetrahydrofolate; the sequence is AHV. Position 227 is an N6-(pyridoxal phosphate)lysine (K227). E243 serves as a coordination point for (6S)-5,6,7,8-tetrahydrofolate.

Belongs to the SHMT family. In terms of assembly, homodimer. It depends on pyridoxal 5'-phosphate as a cofactor.

Its subcellular location is the cytoplasm. Its pathway is amino-acid biosynthesis; glycine biosynthesis; glycine from L-serine: step 1/1. Its function is as follows. Catalyzes the reversible interconversion of serine and glycine with a modified folate serving as the one-carbon carrier. Also exhibits a pteridine-independent aldolase activity toward beta-hydroxyamino acids, producing glycine and aldehydes, via a retro-aldol mechanism. In Saccharolobus islandicus (strain L.S.2.15 / Lassen #1) (Sulfolobus islandicus), this protein is Serine hydroxymethyltransferase.